A 225-amino-acid polypeptide reads, in one-letter code: MSVTLKVEEREVRPRSLRKQLRHEGKALGVVYGYKVESTPISFDEKELVKVIRDHGENVLVALQIGGKKVNTLINKLDMDIFTPTIKHVEFIAVKMDEETEVETDIVLVGEAAGAKLGGFLSQTLFKVTVAATPDKLPERIEVDVTELAIGDSITVADLPEEKDFRVVTEGDIQVAAVVESTLEAELEEIEEAEAEAQATDADTATDDSEQTSEEQAEENKEDKE.

The disordered stretch occupies residues 188 to 225 (EEIEEAEAEAQATDADTATDDSEQTSEEQAEENKEDKE). Positions 204–217 (TATDDSEQTSEEQA) are enriched in acidic residues.

The protein belongs to the bacterial ribosomal protein bL25 family. CTC subfamily. Part of the 50S ribosomal subunit; part of the 5S rRNA/L5/L18/L25 subcomplex. Contacts the 5S rRNA. Binds to the 5S rRNA independently of L5 and L18.

In terms of biological role, this is one of the proteins that binds to the 5S RNA in the ribosome where it forms part of the central protuberance. In Exiguobacterium sibiricum (strain DSM 17290 / CCUG 55495 / CIP 109462 / JCM 13490 / 255-15), this protein is Large ribosomal subunit protein bL25.